We begin with the raw amino-acid sequence, 529 residues long: Putative cysteine ligase BshC (529 aa).

Residues 450–485 (VKQTKGLENLEKRLLKAQKRNLSDQLQRVIDLQCEL) are a coiled coil.

Belongs to the BshC family.

This is Putative cysteine ligase BshC from Flavobacterium johnsoniae (strain ATCC 17061 / DSM 2064 / JCM 8514 / BCRC 14874 / CCUG 350202 / NBRC 14942 / NCIMB 11054 / UW101) (Cytophaga johnsonae).